Reading from the N-terminus, the 302-residue chain is tRNA-cytidine(32) 2-sulfurtransferase (302 aa).

The short motif at 43 to 48 (SGGKDS) is the PP-loop motif element. [4Fe-4S] cluster-binding residues include Cys-118, Cys-121, and Cys-209.

The protein belongs to the TtcA family. As to quaternary structure, homodimer. It depends on Mg(2+) as a cofactor. [4Fe-4S] cluster serves as cofactor.

It localises to the cytoplasm. It carries out the reaction cytidine(32) in tRNA + S-sulfanyl-L-cysteinyl-[cysteine desulfurase] + AH2 + ATP = 2-thiocytidine(32) in tRNA + L-cysteinyl-[cysteine desulfurase] + A + AMP + diphosphate + H(+). Its pathway is tRNA modification. Functionally, catalyzes the ATP-dependent 2-thiolation of cytidine in position 32 of tRNA, to form 2-thiocytidine (s(2)C32). The sulfur atoms are provided by the cysteine/cysteine desulfurase (IscS) system. The sequence is that of tRNA-cytidine(32) 2-sulfurtransferase from Polynucleobacter necessarius subsp. necessarius (strain STIR1).